A 279-amino-acid polypeptide reads, in one-letter code: Octanoyl-[GcvH]:protein N-octanoyltransferase (279 aa).

Positions 41–247 (DLSCNVVRTW…ALKDLGANLN (207 aa)) constitute a BPL/LPL catalytic domain. Residue C146 is the Acyl-thioester intermediate of the active site.

It belongs to the octanoyltransferase LipL family.

The catalysed reaction is N(6)-octanoyl-L-lysyl-[glycine-cleavage complex H protein] + L-lysyl-[lipoyl-carrier protein] = N(6)-octanoyl-L-lysyl-[lipoyl-carrier protein] + L-lysyl-[glycine-cleavage complex H protein]. The protein operates within protein modification; protein lipoylation via endogenous pathway; protein N(6)-(lipoyl)lysine from octanoyl-[acyl-carrier-protein]. In terms of biological role, catalyzes the amidotransfer (transamidation) of the octanoyl moiety from octanoyl-GcvH to the lipoyl domain of the E2 subunit of lipoate-dependent enzymes. The sequence is that of Octanoyl-[GcvH]:protein N-octanoyltransferase from Staphylococcus epidermidis (strain ATCC 35984 / DSM 28319 / BCRC 17069 / CCUG 31568 / BM 3577 / RP62A).